A 156-amino-acid chain; its full sequence is ATP synthase subunit b (156 aa).

A helical membrane pass occupies residues 11–31 (LIAFALFVWFCMKFVWPPIIN).

It belongs to the ATPase B chain family. In terms of assembly, F-type ATPases have 2 components, F(1) - the catalytic core - and F(0) - the membrane proton channel. F(1) has five subunits: alpha(3), beta(3), gamma(1), delta(1), epsilon(1). F(0) has three main subunits: a(1), b(2) and c(10-14). The alpha and beta chains form an alternating ring which encloses part of the gamma chain. F(1) is attached to F(0) by a central stalk formed by the gamma and epsilon chains, while a peripheral stalk is formed by the delta and b chains.

Its subcellular location is the cell inner membrane. Functionally, f(1)F(0) ATP synthase produces ATP from ADP in the presence of a proton or sodium gradient. F-type ATPases consist of two structural domains, F(1) containing the extramembraneous catalytic core and F(0) containing the membrane proton channel, linked together by a central stalk and a peripheral stalk. During catalysis, ATP synthesis in the catalytic domain of F(1) is coupled via a rotary mechanism of the central stalk subunits to proton translocation. In terms of biological role, component of the F(0) channel, it forms part of the peripheral stalk, linking F(1) to F(0). This chain is ATP synthase subunit b, found in Haemophilus influenzae (strain 86-028NP).